The chain runs to 371 residues: LIM domain-binding protein 2 (371 aa).

Disordered stretches follow at residues 244–289 (APPA…AAAN) and 325–371 (QYDA…QASQ). The span at 263–289 (STSSTSNSSAGNNANSTNSKKKSAAAN) shows a compositional bias: low complexity. Residues 296-335 (DVMVVGEPTLMGGEFGDEDERLITRLENTQYDAANGMDDE) enclose the LIM interaction domain (LID) domain. Residues 339 to 371 (NNSPALGNNSPWNSKPPANQETKSENPTPQASQ) are compositionally biased toward polar residues.

It belongs to the LDB family. As to expression, first expressed at stages 15-16 in presumptive limb mesoderm. As limb outgrowth proceeds, expressed in the entire limb bud, concentrating in the distal mesoderm throughout limb development. Both hindlimbs and forelimbs exhibit similar expression patterns.

The protein localises to the nucleus. Binds to the LIM domain of a wide variety of LIM domain-containing transcription factors. The protein is LIM domain-binding protein 2 (LDB2) of Gallus gallus (Chicken).